A 337-amino-acid chain; its full sequence is Ketol-acid reductoisomerase (NADP(+)) (337 aa).

The KARI N-terminal Rossmann domain maps to 1 to 180 (MFYEKDADVD…GGGKSGIIET (180 aa)). NADP(+) contacts are provided by residues 22–25 (YGSQ), Arg46, Ser49, Ser51, and 81–84 (DELQ). His106 is a catalytic residue. Residue Gly132 participates in NADP(+) binding. The region spanning 181–326 (TFKDECETDL…AELRAMMPWI (146 aa)) is the KARI C-terminal knotted domain. Mg(2+)-binding residues include Asp189, Glu193, Glu225, and Glu229. Ser250 lines the substrate pocket.

The protein belongs to the ketol-acid reductoisomerase family. Mg(2+) is required as a cofactor.

It carries out the reaction (2R)-2,3-dihydroxy-3-methylbutanoate + NADP(+) = (2S)-2-acetolactate + NADPH + H(+). The enzyme catalyses (2R,3R)-2,3-dihydroxy-3-methylpentanoate + NADP(+) = (S)-2-ethyl-2-hydroxy-3-oxobutanoate + NADPH + H(+). The protein operates within amino-acid biosynthesis; L-isoleucine biosynthesis; L-isoleucine from 2-oxobutanoate: step 2/4. It functions in the pathway amino-acid biosynthesis; L-valine biosynthesis; L-valine from pyruvate: step 2/4. Its function is as follows. Involved in the biosynthesis of branched-chain amino acids (BCAA). Catalyzes an alkyl-migration followed by a ketol-acid reduction of (S)-2-acetolactate (S2AL) to yield (R)-2,3-dihydroxy-isovalerate. In the isomerase reaction, S2AL is rearranged via a Mg-dependent methyl migration to produce 3-hydroxy-3-methyl-2-ketobutyrate (HMKB). In the reductase reaction, this 2-ketoacid undergoes a metal-dependent reduction by NADPH to yield (R)-2,3-dihydroxy-isovalerate. The chain is Ketol-acid reductoisomerase (NADP(+)) from Pelagibacter ubique (strain HTCC1062).